The primary structure comprises 37 residues: Large ribosomal subunit protein bL36 (37 aa).

Belongs to the bacterial ribosomal protein bL36 family.

This chain is Large ribosomal subunit protein bL36, found in Deinococcus deserti (strain DSM 17065 / CIP 109153 / LMG 22923 / VCD115).